The sequence spans 307 residues: MSQKIKCALIGPGNIGTDLLAKLQRSPVLEPVWMVGIDPDSDGLKRAREMGIKTTAEGVDGLLPHMHVDGVQIVFDATSAYVHAENSRKVNERGALMIDLTPAAIGPFCVPPVNLIQHLGSGAMNVNMVTCGGQATIPMVAAVSRVQAVAYGEIVATVSSKSVGPGTRKNIDEFTRTTAGAVEKVGGAKKGKAIIVINPAEPPLMMRDTVHCLTEDEPDQAAITASIHQMLAEVQKYVPGYRLVNGPVFDGKRVSVFLEVEGLGDYLPKYAGNLDIMTAAAARTAEMFAEQMLAGKLTLAPVAPIAA.

Catalysis depends on cysteine 131, which acts as the Acyl-thioester intermediate. NAD(+) contacts are provided by residues 162–170 (SVGPGTRKN) and asparagine 273.

The protein belongs to the acetaldehyde dehydrogenase family.

It carries out the reaction acetaldehyde + NAD(+) + CoA = acetyl-CoA + NADH + H(+). The polypeptide is Acetaldehyde dehydrogenase 2 (aphF) (Comamonas testosteroni (Pseudomonas testosteroni)).